A 513-amino-acid chain; its full sequence is Glucose-6-phosphate 1-dehydrogenase 2 (513 aa).

Position 2 is an N-acetylalanine (Ala2). The residue at position 8 (Ser8) is a Phosphoserine. Phosphothreonine is present on Thr10. Residues Gly38–Lys45 and Arg72 contribute to the NADP(+) site. The residue at position 89 (Lys89) is an N6-acetyllysine. Residues Tyr147 and Lys171 each contribute to the NADP(+) site. D-glucose 6-phosphate contacts are provided by residues Lys171, His201–Lys205, Glu239, and Asp258. At Lys171 the chain carries N6-(2-hydroxyisobutyryl)lysine; alternate. An N6-acetyllysine; alternate modification is found at Lys171. The active-site Proton acceptor is the His263. Position 357 (Arg357) interacts with NADP(+). Positions 360 and 365 each coordinate D-glucose 6-phosphate. Residues Lys366, Arg370, and Arg393 each contribute to the NADP(+) site. Gln395 contributes to the D-glucose 6-phosphate binding site. Asp421–Thr423 contributes to the NADP(+) binding site. Lys432 is subject to N6-acetyllysine. 2 residues coordinate NADP(+): Arg487 and Tyr503. Tyr503 carries the post-translational modification Phosphotyrosine.

The protein belongs to the glucose-6-phosphate dehydrogenase family. As to quaternary structure, homotetramer; dimer of dimers. Interacts with SIRT2; the interaction is enhanced by H(2)O(2) treatment. Post-translationally, acetylated by ELP3; acetylation inhibits its homodimerization and enzyme activity. Deacetylated by SIRT2; deacetylation stimulates its enzyme activity. Testis.

It is found in the cytoplasm. The protein localises to the cytosol. It localises to the membrane. The enzyme catalyses D-glucose 6-phosphate + NADP(+) = 6-phospho-D-glucono-1,5-lactone + NADPH + H(+). Its pathway is carbohydrate degradation; pentose phosphate pathway; D-ribulose 5-phosphate from D-glucose 6-phosphate (oxidative stage): step 1/3. Catalyzes the rate-limiting step of the oxidative pentose-phosphate pathway, which represents a route for the dissimilation of carbohydrates besides glycolysis. The main function of this enzyme is to provide reducing power (NADPH) and pentose phosphates for fatty acid and nucleic acid synthesis. The polypeptide is Glucose-6-phosphate 1-dehydrogenase 2 (G6pd2) (Mus musculus (Mouse)).